We begin with the raw amino-acid sequence, 87 residues long: Tachykinin-1 (87 aa).

The N-terminal stretch at 1 to 22 (MIRVGLILCCIFIAGVFEASSA) is a signal peptide. Positions 23-37 (DDMLTAHNLIKRSEV) are excised as a propeptide. Methionine 49 carries the post-translational modification Methionine amide. The propeptide occupies 52-87 (SEELTRRLIQHPGSMSETSKRGPPKKVSRRPYILKK). The disordered stretch occupies residues 61 to 87 (QHPGSMSETSKRGPPKKVSRRPYILKK). The span at 73 to 87 (GPPKKVSRRPYILKK) shows a compositional bias: basic residues.

This sequence belongs to the tachykinin family. Expressed in the posterior salivary gland and more specifically in the mucus-secreting gland cells.

It is found in the secreted. Tachykinins are active peptides which excite neurons, evoke behavioral responses, are potent vasodilators and secretagogues, and contract (directly or indirectly) many smooth muscles. This chain is Tachykinin-1, found in Octopus vulgaris (Common octopus).